Reading from the N-terminus, the 124-residue chain is MSRLSWKKEHKLLRKPEFDLCYEQGKKLFTKSFILFVLCHGSGPSGVRLGLTVSRKKGPAVVRNRIKRVLRSYFRINQEIFQVRADIIIVPKRALDGKTITYALAEKELLPMVGKINKLSCGGE.

This sequence belongs to the RnpA family. In terms of assembly, consists of a catalytic RNA component (M1 or rnpB) and a protein subunit.

The catalysed reaction is Endonucleolytic cleavage of RNA, removing 5'-extranucleotides from tRNA precursor.. Functionally, RNaseP catalyzes the removal of the 5'-leader sequence from pre-tRNA to produce the mature 5'-terminus. It can also cleave other RNA substrates such as 4.5S RNA. The protein component plays an auxiliary but essential role in vivo by binding to the 5'-leader sequence and broadening the substrate specificity of the ribozyme. This is Ribonuclease P protein component from Maridesulfovibrio salexigens (strain ATCC 14822 / DSM 2638 / NCIMB 8403 / VKM B-1763) (Desulfovibrio salexigens).